The sequence spans 105 residues: Pyruvate synthase subunit PorD (105 aa).

4Fe-4S ferredoxin-type domains lie at 44–73 (FKPE…LDEE) and 74–103 (GYPV…MVRE). Cys-53, Cys-56, Cys-59, Cys-63, Cys-83, Cys-86, Cys-89, and Cys-93 together coordinate [4Fe-4S] cluster.

As to quaternary structure, heterotetramer of one alpha, one beta, one delta and one gamma chain. The cofactor is [4Fe-4S] cluster.

The polypeptide is Pyruvate synthase subunit PorD (porD) (Pyrococcus furiosus (strain ATCC 43587 / DSM 3638 / JCM 8422 / Vc1)).